A 666-amino-acid chain; its full sequence is MADMEDLFGSDADSEAERKDSDSGSDSDSDQENAASGSNASGSESDQDERGDSGQPSNKELFGDDSEDEGASHHSGSDNHSERSDNRSEASERSDHEDNDPSDVDQHSGSEAPNDDEDEGHRSDGGSHHSEAEGSEKAHSDDEKWGREDKSDQSDDEKIQNSDDEERAQGSDEDKLQNSDDDEKMQNTDDEERPQLSDDERQQLSEEEKANSDDERPVASDNDDEKQNSDDEEQPQLSDEEKMQNSDDERPQASDEEHRHSDDEEEQDHKSESARGSDSEDEVLRMKRKNAIASDSEADSDTEVPKDNSGTMDLFGGADDISSGSDGEDKPPTPGQPVDENGLPQDQQEEEPIPETRIEVEIPKVNTDLGNDLYFVKLPNFLSVEPRPFDPQYYEDEFEDEEMLDEEGRTRLKLKVENTIRWRIRRDEEGNEIKESNARIVKWSDGSMSLHLGNEVFDVYKAPLQGDHNHLFIRQGTGLQGQAVFKTKLTFRPHSTDSATHRKMTLSLADRCSKTQKIRILPMAGRDPECQRTEMIKKEEERLRASIRRESQQRRMREKQHQRGLSASYLEPDRYDEEEEGEESISLAAIKNRYKGGIREERARIYSSDSDEGSEEDKAQRLLKAKKLTSDEEGEPSGKRKAEDDDKANKKHKKYVISDEEEEDDD.

Over residues 1–14 (MADMEDLFGSDADS) the composition is skewed to acidic residues. 3 disordered regions span residues 1 to 357 (MADM…PETR), 547 to 583 (IRRE…EGEE), and 602 to 666 (RARI…EDDD). Position 2 is an N-acetylalanine (Ala2). Residues Ser10 and Ser14 each carry the phosphoserine modification. Residues 32–44 (ENAASGSNASGSE) are compositionally biased toward low complexity. Ser66 carries the phosphoserine modification. Composition is skewed to basic and acidic residues over residues 70–96 (GASH…RSDH) and 119–178 (EGHR…KLQN). 5 positions are modified to phosphoserine: Ser151, Ser154, Ser162, Ser171, and Ser179. Residues 179–192 (SDDDEKMQNTDDEE) show a composition bias toward acidic residues. Position 188 is a phosphothreonine (Thr188). A compositionally biased stretch (basic and acidic residues) spans 193–218 (RPQLSDDERQQLSEEEKANSDDERPV). Residues Ser197, Ser205, Ser212, Ser220, Ser229, Ser238, Ser246, Ser254, Ser277, Ser279, Ser294, Ser296, and Ser300 each carry the phosphoserine modification. Residues 239 to 285 (DEEKMQNSDDERPQASDEEHRHSDDEEEQDHKSESARGSDSEDEVLR) are compositionally biased toward basic and acidic residues. Positions 316–325 (GGADDISSGS) are enriched in low complexity. Positions 547–561 (IRRESQQRRMREKQH) are enriched in basic and acidic residues. Positions 574 to 583 (RYDEEEEGEE) are enriched in acidic residues. A Phosphotyrosine modification is found at Tyr606. Residues Ser607, Ser608, Ser610, and Ser614 each carry the phosphoserine modification. Position 629 is a phosphothreonine (Thr629). Ser630 is modified (phosphoserine). Positions 636 to 648 (PSGKRKAEDDDKA) are enriched in basic and acidic residues. Ser658 is modified (phosphoserine).

The protein belongs to the LEO1 family. In terms of assembly, component of the PAF1 complex, which consists of CDC73, PAF1, LEO1, CTR9, RTF1 and SKIC8. The PAF1 complex interacts with PHF5A. Interacts with TCEA1, SUPT5H and CTNNB1. Interacts with SETD5. (Microbial infection) The PAF1 complex interacts with Zika virus French Polynesia 10087PF/2013 non-structural protein 5/NS5. The interaction with viral NS5 proteins may reduce the antiviral immune response by inhibiting the recruitment of the PAF1 complex to interferon-stimulated genes, thus preventing their transcription. As to quaternary structure, (Microbial infection) The PAF1 complex interacts with Dengue virus DENV2 16681 non-structural protein 5/NS5. The PAF1 complex interacts with Dengue virus DENV4 Dominica/814669/1981 non-structural protein 5/NS5. The interaction with viral NS5 proteins may reduce the antiviral immune response by inhibiting the recruitment of the PAF1 complex to interferon-stimulated genes, thus preventing their transcription. In terms of tissue distribution, highly expressed in skeletal muscle and heart. Weakly expressed in placenta and liver.

The protein resides in the nucleus. Component of the PAF1 complex (PAF1C) which has multiple functions during transcription by RNA polymerase II and is implicated in regulation of development and maintenance of embryonic stem cell pluripotency. PAF1C associates with RNA polymerase II through interaction with POLR2A CTD non-phosphorylated and 'Ser-2'- and 'Ser-5'-phosphorylated forms and is involved in transcriptional elongation, acting both independently and synergistically with TCEA1 and in cooperation with the DSIF complex and HTATSF1. PAF1C is required for transcription of Hox and Wnt target genes. PAF1C is involved in hematopoiesis and stimulates transcriptional activity of KMT2A/MLL1; it promotes leukemogenesis through association with KMT2A/MLL1-rearranged oncoproteins, such as KMT2A/MLL1-MLLT3/AF9 and KMT2A/MLL1-MLLT1/ENL. PAF1C is involved in histone modifications such as ubiquitination of histone H2B and methylation on histone H3 'Lys-4' (H3K4me3). PAF1C recruits the RNF20/40 E3 ubiquitin-protein ligase complex and the E2 enzyme UBE2A or UBE2B to chromatin which mediate monoubiquitination of 'Lys-120' of histone H2B (H2BK120ub1); UB2A/B-mediated H2B ubiquitination is proposed to be coupled to transcription. PAF1C is involved in mRNA 3' end formation probably through association with cleavage and poly(A) factors. In case of infection by influenza A strain H3N2, PAF1C associates with viral NS1 protein, thereby regulating gene transcription. Involved in polyadenylation of mRNA precursors. Connects PAF1C to Wnt signaling. The sequence is that of RNA polymerase-associated protein LEO1 (LEO1) from Homo sapiens (Human).